The chain runs to 138 residues: Small ribosomal subunit protein uS9 (138 aa).

Residues 99–138 are disordered; it reads DPDNRPPLKTEGYLTRDPRAKERKKYGLHKARKAPQYSKR. Over residues 100–118 the composition is skewed to basic and acidic residues; sequence PDNRPPLKTEGYLTRDPRA. Residues 119–138 are compositionally biased toward basic residues; sequence KERKKYGLHKARKAPQYSKR.

The protein belongs to the universal ribosomal protein uS9 family.

The polypeptide is Small ribosomal subunit protein uS9 (Nostoc punctiforme (strain ATCC 29133 / PCC 73102)).